The sequence spans 344 residues: MTIEEALLGLLDGQTLISSEMESIMSEIMDGQISPIKIAAFLVLLRQRGEEVEEIYGAARAILNHAEQPILEGDPIDTCGTGGDGANTFNISTAASLIAHACGVKVAKHGNRSISSRCGSADVLEAMGFKIDLPKKETEELFKETGFVFLFAPIFHKAMKNVAPVRKELGLRTIFNMLGPLINPARTQRQIIGVYSKDLTGMFAQVLRQFDAKHCLILHGQTDEGGILDEPSVCGPTYISELQHGTVRTYTVHPEDFGLRRHSISQLKGGDARENAQIIWQILDKNGPEAREDAVVFTAGMACYVAELTPSIKEGIDKARQAIHSGAAKQSVERLLEKHRNLVI.

5-phospho-alpha-D-ribose 1-diphosphate-binding positions include G80, 83–84 (GD), T88, 90–93 (NIST), 108–116 (KHGNRSISS), and S120. G80 is an anthranilate binding site. S92 lines the Mg(2+) pocket. Residue N111 participates in anthranilate binding. R166 serves as a coordination point for anthranilate. The Mg(2+) site is built by D229 and E230.

It belongs to the anthranilate phosphoribosyltransferase family. In terms of assembly, homodimer. Mg(2+) is required as a cofactor.

The enzyme catalyses N-(5-phospho-beta-D-ribosyl)anthranilate + diphosphate = 5-phospho-alpha-D-ribose 1-diphosphate + anthranilate. The protein operates within amino-acid biosynthesis; L-tryptophan biosynthesis; L-tryptophan from chorismate: step 2/5. Its function is as follows. Catalyzes the transfer of the phosphoribosyl group of 5-phosphorylribose-1-pyrophosphate (PRPP) to anthranilate to yield N-(5'-phosphoribosyl)-anthranilate (PRA). The chain is Anthranilate phosphoribosyltransferase from Chloroherpeton thalassium (strain ATCC 35110 / GB-78).